The following is a 365-amino-acid chain: Glycolaldehyde reductase (365 aa).

NAD(+) contacts are provided by Asp37, Gly94, Lys95, Thr116, Ser119, Ser125, Leu127, and Tyr131. The Zn(2+) site is built by Asp171, His254, and His271.

It belongs to the iron-containing alcohol dehydrogenase family. Zn(2+) serves as cofactor.

The enzyme catalyses ethylene glycol + NAD(+) = glycolaldehyde + NADH + H(+). Is subject to substrate inhibition. Oxidoreductase involved in the non-carboxylating pentose bisphosphate pathway, a nucleoside degradation pathway present in some halophilic archaea. Catalyzes the reduction of glycolaldehyde to ethylene glycol. Cannot catalyze the oxidation of glycerol 1-phosphate nor the reduction of dihydroxyacetone phosphate (DHAP). The protein is Glycolaldehyde reductase of Halobacterium salinarum (strain ATCC 700922 / JCM 11081 / NRC-1) (Halobacterium halobium).